The primary structure comprises 128 residues: UPF0102 protein Acry_2261 (128 aa).

Belongs to the UPF0102 family.

The chain is UPF0102 protein Acry_2261 from Acidiphilium cryptum (strain JF-5).